The chain runs to 64 residues: Prokaryotic ubiquitin-like protein UBact (64 aa).

The disordered stretch occupies residues 1-64 (MFNGEEVILF…SERYRQRTGE (64 aa)). Basic and acidic residues predominate over residues 22 to 64 (REIHKDAPAPKRPETKKTGDRLMDRMKKVDPNQSERYRQRTGE). Residue E64 forms an Isoglutamyl lysine isopeptide (Glu-Lys) (interchain with K-? in acceptor proteins) linkage.

Belongs to the ubiquitin-like protein UBact family.

Functionally, may function as a protein modifier covalently attached to lysine residues of substrate proteins. This may serve to target the modified proteins for degradation by proteasomes. The chain is Prokaryotic ubiquitin-like protein UBact from Leptospirillum ferriphilum (strain ML-04).